The sequence spans 462 residues: uncharacterized protein (462 aa).

2 helical membrane-spanning segments follow: residues 381 to 401 (WILG…FKGM) and 433 to 453 (LWIL…NLYI).

Its subcellular location is the cell membrane. This is an uncharacterized protein from Methanocaldococcus jannaschii (strain ATCC 43067 / DSM 2661 / JAL-1 / JCM 10045 / NBRC 100440) (Methanococcus jannaschii).